The primary structure comprises 65 residues: Small, acid-soluble spore protein H 3 (65 aa).

This sequence belongs to the SspH family.

Its subcellular location is the spore core. The sequence is that of Small, acid-soluble spore protein H 3 from Geobacillus thermodenitrificans (strain NG80-2).